Consider the following 95-residue polypeptide: Co-chaperonin GroES (95 aa).

The protein belongs to the GroES chaperonin family. In terms of assembly, heptamer of 7 subunits arranged in a ring. Interacts with the chaperonin GroEL.

The protein resides in the cytoplasm. In terms of biological role, together with the chaperonin GroEL, plays an essential role in assisting protein folding. The GroEL-GroES system forms a nano-cage that allows encapsulation of the non-native substrate proteins and provides a physical environment optimized to promote and accelerate protein folding. GroES binds to the apical surface of the GroEL ring, thereby capping the opening of the GroEL channel. The chain is Co-chaperonin GroES from Streptococcus thermophilus (strain ATCC BAA-491 / LMD-9).